The chain runs to 109 residues: uncharacterized protein (109 aa).

The protein to M.jannaschii MJ1244 and MJ1245 and M.thermoautotrophicum MTH1110.

This is an uncharacterized protein from Methanococcus maripaludis (Methanococcus deltae).